The sequence spans 257 residues: 5'-nucleotidase SurE (257 aa).

A divalent metal cation is bound by residues D8, D9, S40, and N92.

It belongs to the SurE nucleotidase family. A divalent metal cation serves as cofactor.

It is found in the cytoplasm. It catalyses the reaction a ribonucleoside 5'-phosphate + H2O = a ribonucleoside + phosphate. Its function is as follows. Nucleotidase that shows phosphatase activity on nucleoside 5'-monophosphates. This is 5'-nucleotidase SurE from Rhizobium etli (strain ATCC 51251 / DSM 11541 / JCM 21823 / NBRC 15573 / CFN 42).